A 497-amino-acid polypeptide reads, in one-letter code: Aspartyl/glutamyl-tRNA(Asn/Gln) amidotransferase subunit B (497 aa).

Belongs to the GatB/GatE family. GatB subfamily. As to quaternary structure, heterotrimer of A, B and C subunits.

It catalyses the reaction L-glutamyl-tRNA(Gln) + L-glutamine + ATP + H2O = L-glutaminyl-tRNA(Gln) + L-glutamate + ADP + phosphate + H(+). The catalysed reaction is L-aspartyl-tRNA(Asn) + L-glutamine + ATP + H2O = L-asparaginyl-tRNA(Asn) + L-glutamate + ADP + phosphate + 2 H(+). Functionally, allows the formation of correctly charged Asn-tRNA(Asn) or Gln-tRNA(Gln) through the transamidation of misacylated Asp-tRNA(Asn) or Glu-tRNA(Gln) in organisms which lack either or both of asparaginyl-tRNA or glutaminyl-tRNA synthetases. The reaction takes place in the presence of glutamine and ATP through an activated phospho-Asp-tRNA(Asn) or phospho-Glu-tRNA(Gln). The chain is Aspartyl/glutamyl-tRNA(Asn/Gln) amidotransferase subunit B from Nocardioides sp. (strain ATCC BAA-499 / JS614).